The sequence spans 293 residues: Protease HtpX (293 aa).

2 consecutive transmembrane segments (helical) span residues 2 to 22 and 38 to 58; these read FRIL…SVTL and LTSL…ISLF. His145 contributes to the Zn(2+) binding site. Residue Glu146 is part of the active site. Residue His149 participates in Zn(2+) binding. 2 helical membrane-spanning segments follow: residues 156–176 and 193–213; these read VTLA…ARII and IGFF…ASII. Glu222 lines the Zn(2+) pocket.

The protein belongs to the peptidase M48B family. Zn(2+) serves as cofactor.

It localises to the cell inner membrane. The chain is Protease HtpX from Hahella chejuensis (strain KCTC 2396).